The sequence spans 495 residues: Glycerol kinase (495 aa).

Residue Thr-14 participates in ADP binding. Residues Thr-14, Thr-15, and Ser-16 each contribute to the ATP site. Thr-14 lines the sn-glycerol 3-phosphate pocket. Arg-18 is an ADP binding site. Arg-84, Glu-85, Tyr-136, and Asp-246 together coordinate sn-glycerol 3-phosphate. Positions 84, 85, 136, 246, and 247 each coordinate glycerol. Residues Thr-268 and Gly-312 each coordinate ADP. The ATP site is built by Thr-268, Gly-312, Gln-316, and Gly-413. ADP-binding residues include Gly-413 and Asn-417.

The protein belongs to the FGGY kinase family.

It carries out the reaction glycerol + ATP = sn-glycerol 3-phosphate + ADP + H(+). Its pathway is polyol metabolism; glycerol degradation via glycerol kinase pathway; sn-glycerol 3-phosphate from glycerol: step 1/1. Inhibited by fructose 1,6-bisphosphate (FBP). Key enzyme in the regulation of glycerol uptake and metabolism. Catalyzes the phosphorylation of glycerol to yield sn-glycerol 3-phosphate. The polypeptide is Glycerol kinase (Bdellovibrio bacteriovorus (strain ATCC 15356 / DSM 50701 / NCIMB 9529 / HD100)).